The primary structure comprises 157 residues: SsrA-binding protein (157 aa).

Basic and acidic residues predominate over residues 138-151 (ATEAKRDWGREKQR). The interval 138 to 157 (ATEAKRDWGREKQRLLKQHS) is disordered.

This sequence belongs to the SmpB family.

The protein resides in the cytoplasm. In terms of biological role, required for rescue of stalled ribosomes mediated by trans-translation. Binds to transfer-messenger RNA (tmRNA), required for stable association of tmRNA with ribosomes. tmRNA and SmpB together mimic tRNA shape, replacing the anticodon stem-loop with SmpB. tmRNA is encoded by the ssrA gene; the 2 termini fold to resemble tRNA(Ala) and it encodes a 'tag peptide', a short internal open reading frame. During trans-translation Ala-aminoacylated tmRNA acts like a tRNA, entering the A-site of stalled ribosomes, displacing the stalled mRNA. The ribosome then switches to translate the ORF on the tmRNA; the nascent peptide is terminated with the 'tag peptide' encoded by the tmRNA and targeted for degradation. The ribosome is freed to recommence translation, which seems to be the essential function of trans-translation. The sequence is that of SsrA-binding protein from Cereibacter sphaeroides (strain ATCC 17025 / ATH 2.4.3) (Rhodobacter sphaeroides).